Consider the following 172-residue polypeptide: 3-hydroxydecanoyl-[acyl-carrier-protein] dehydratase (172 aa).

His71 is a catalytic residue.

The protein belongs to the thioester dehydratase family. FabA subfamily. Homodimer.

It is found in the cytoplasm. The enzyme catalyses a (3R)-hydroxyacyl-[ACP] = a (2E)-enoyl-[ACP] + H2O. The catalysed reaction is (3R)-hydroxydecanoyl-[ACP] = (2E)-decenoyl-[ACP] + H2O. It catalyses the reaction (2E)-decenoyl-[ACP] = (3Z)-decenoyl-[ACP]. The protein operates within lipid metabolism; fatty acid biosynthesis. Its function is as follows. Necessary for the introduction of cis unsaturation into fatty acids. Catalyzes the dehydration of (3R)-3-hydroxydecanoyl-ACP to E-(2)-decenoyl-ACP and then its isomerization to Z-(3)-decenoyl-ACP. Can catalyze the dehydratase reaction for beta-hydroxyacyl-ACPs with saturated chain lengths up to 16:0, being most active on intermediate chain length. The polypeptide is 3-hydroxydecanoyl-[acyl-carrier-protein] dehydratase (Escherichia fergusonii (strain ATCC 35469 / DSM 13698 / CCUG 18766 / IAM 14443 / JCM 21226 / LMG 7866 / NBRC 102419 / NCTC 12128 / CDC 0568-73)).